A 334-amino-acid chain; its full sequence is Ribosomal RNA small subunit methyltransferase H (334 aa).

Residues 53 to 55 (GGH), D72, F99, D122, and H129 contribute to the S-adenosyl-L-methionine site.

It belongs to the methyltransferase superfamily. RsmH family.

The protein localises to the cytoplasm. The catalysed reaction is cytidine(1402) in 16S rRNA + S-adenosyl-L-methionine = N(4)-methylcytidine(1402) in 16S rRNA + S-adenosyl-L-homocysteine + H(+). Its function is as follows. Specifically methylates the N4 position of cytidine in position 1402 (C1402) of 16S rRNA. The sequence is that of Ribosomal RNA small subunit methyltransferase H from Leptospira interrogans serogroup Icterohaemorrhagiae serovar Lai (strain 56601).